An 884-amino-acid chain; its full sequence is Protein P (884 aa).

The tract at residues methionine 1–glutamine 184 is terminal protein domain (TP). The tract at residues leucine 185–leucine 387 is spacer. The interval arginine 299–serine 345 is disordered. The segment at aspartate 388–glutamine 729 is polymerase/reverse transcriptase domain (RT). Positions aspartate 398–isoleucine 639 constitute a Reverse transcriptase domain. The Mg(2+) site is built by aspartate 470, aspartate 590, and aspartate 591.

This sequence belongs to the hepadnaviridae P protein family.

It catalyses the reaction DNA(n) + a 2'-deoxyribonucleoside 5'-triphosphate = DNA(n+1) + diphosphate. It carries out the reaction Endonucleolytic cleavage to 5'-phosphomonoester.. With respect to regulation, activated by host HSP70 and HSP40 in vitro to be able to bind the epsilon loop of the pgRNA. Because deletion of the RNase H region renders the protein partly chaperone-independent, the chaperones may be needed indirectly to relieve occlusion of the RNA-binding site by this domain. Inhibited by several reverse-transcriptase inhibitors: Lamivudine, Adefovir and Entecavir. In terms of biological role, multifunctional enzyme that converts the viral RNA genome into dsDNA in viral cytoplasmic capsids. This enzyme displays a DNA polymerase activity that can copy either DNA or RNA templates, and a ribonuclease H (RNase H) activity that cleaves the RNA strand of RNA-DNA heteroduplexes in a partially processive 3'- to 5'-endonucleasic mode. Neo-synthesized pregenomic RNA (pgRNA) are encapsidated together with the P protein, and reverse-transcribed inside the nucleocapsid. Initiation of reverse-transcription occurs first by binding the epsilon loop on the pgRNA genome, and is initiated by protein priming, thereby the 5'-end of (-)DNA is covalently linked to P protein. Partial (+)DNA is synthesized from the (-)DNA template and generates the relaxed circular DNA (RC-DNA) genome. After budding and infection, the RC-DNA migrates in the nucleus, and is converted into a plasmid-like covalently closed circular DNA (cccDNA). The activity of P protein does not seem to be necessary for cccDNA generation, and is presumably released from (+)DNA by host nuclear DNA repair machinery. In Woodchuck hepatitis B virus (isolate 7) (WHV), this protein is Protein P.